Here is a 619-residue protein sequence, read N- to C-terminus: Long-chain fatty acid transport protein 6 (619 aa).

2 consecutive transmembrane segments (helical) span residues 22–42 and 119–139; these read LLFPYFWDDFWFVLKVVLIII and VHVWFGLAKLGCVVAFLNTNI. 221–232 serves as a coordination point for AMP; that stretch reads YIFTSGTTGLPK.

Belongs to the ATP-dependent AMP-binding enzyme family. In terms of tissue distribution, strongly expressed in heart and localizes to cardiac myocytes. Expressed at moderate levels in placenta, testis, and adrenal glands. Expressed at very low levels in kidney, bladder and uterus.

It localises to the cell membrane. It is found in the sarcolemma. The enzyme catalyses a fatty acid(in) = a fatty acid(out). It catalyses the reaction hexadecanoate(out) = hexadecanoate(in). The catalysed reaction is (9Z)-octadecenoate(out) = (9Z)-octadecenoate(in). It carries out the reaction (9Z,12Z)-octadecadienoate(out) = (9Z,12Z)-octadecadienoate(in). The enzyme catalyses a very long-chain fatty acid + ATP + CoA = a very long-chain fatty acyl-CoA + AMP + diphosphate. It catalyses the reaction tetracosanoate + ATP + CoA = tetracosanoyl-CoA + AMP + diphosphate. The catalysed reaction is a long-chain fatty acid + ATP + CoA = a long-chain fatty acyl-CoA + AMP + diphosphate. It carries out the reaction (5Z,8Z,11Z,14Z)-eicosatetraenoate + ATP + CoA = (5Z,8Z,11Z,14Z)-eicosatetraenoyl-CoA + AMP + diphosphate. The enzyme catalyses (9Z)-octadecenoate + ATP + CoA = (9Z)-octadecenoyl-CoA + AMP + diphosphate. In terms of biological role, mediates the import of long-chain fatty acids (LCFA) into the cell by facilitating their transport at the plasma membrane. Also functions as an acyl-CoA ligase catalyzing the ATP-dependent formation of fatty acyl-CoA using LCFA and very-long-chain fatty acids (VLCFA) as substrates. Plays a pivotal role in regulating available LCFA substrates from exogenous sources in tissues undergoing high levels of beta-oxidation such as the heart. The protein is Long-chain fatty acid transport protein 6 (SLC27A6) of Homo sapiens (Human).